Reading from the N-terminus, the 77-residue chain is Conotoxin VnMKLT1-012 (77 aa).

Residues 1-22 form the signal peptide; the sequence is MKLTCMMIVAVLFLTAWTFVTA. The propeptide occupies 23–48; that stretch reads DDSRNGLDYLFPKARHEMNPKASRDI. Disulfide bonds link Cys51–Cys68, Cys58–Cys72, and Cys67–Cys76.

The protein belongs to the conotoxin O1 superfamily. As to expression, expressed by the venom duct.

It is found in the secreted. This is Conotoxin VnMKLT1-012 from Conus ventricosus (Mediterranean cone).